Here is a 158-residue protein sequence, read N- to C-terminus: Placenta growth factor (158 aa).

Positions 1 to 23 form a signal peptide, or 26; the sequence is MLAMKLFTCFLQVLAGLAVHSQG. Residues asparagine 29 and asparagine 30 are each glycosylated (N-linked (GlcNAc...) asparagine). 3 disulfides stabilise this stretch: cysteine 48/cysteine 90, cysteine 79/cysteine 125, and cysteine 83/cysteine 127. Asparagine 97 carries N-linked (GlcNAc...) asparagine glycosylation. The interval 136–158 is disordered; the sequence is AERRKTKGKRKQSKTPQTEEPHL. Residues 137-148 show a composition bias toward basic residues; the sequence is ERRKTKGKRKQS.

This sequence belongs to the PDGF/VEGF growth factor family. As to quaternary structure, antiparallel homodimer; disulfide-linked. Also found as heterodimer with VEGFA/VEGF.

Its subcellular location is the secreted. In terms of biological role, growth factor active in angiogenesis and endothelial cell growth, stimulating their proliferation and migration. It binds to the receptor FLT1/VEGFR-1. Also promotes cell tumor growth. The protein is Placenta growth factor (Pgf) of Rattus norvegicus (Rat).